The following is a 319-amino-acid chain: ATP-dependent 6-phosphofructokinase (319 aa).

ATP contacts are provided by residues Gly10, 71–72, and 101–104; these read RS and GDGS. Asp102 serves as a coordination point for Mg(2+). 125–127 contributes to the substrate binding site; that stretch reads TID. Catalysis depends on Asp127, which acts as the Proton acceptor. Arg154 serves as a coordination point for ADP. Residues Arg162 and 169-171 contribute to the substrate site; that span reads MGR. Residue 185-187 coordinates ADP; it reads GAE. Residues Glu223, Arg244, and 250–253 contribute to the substrate site; that span reads HVQR.

The protein belongs to the phosphofructokinase type A (PFKA) family. ATP-dependent PFK group I subfamily. Prokaryotic clade 'B1' sub-subfamily. Homotetramer. Mg(2+) is required as a cofactor.

It is found in the cytoplasm. It carries out the reaction beta-D-fructose 6-phosphate + ATP = beta-D-fructose 1,6-bisphosphate + ADP + H(+). It functions in the pathway carbohydrate degradation; glycolysis; D-glyceraldehyde 3-phosphate and glycerone phosphate from D-glucose: step 3/4. Its activity is regulated as follows. Allosterically activated by ADP and other diphosphonucleosides, and allosterically inhibited by phosphoenolpyruvate. Its function is as follows. Catalyzes the phosphorylation of D-fructose 6-phosphate to fructose 1,6-bisphosphate by ATP, the first committing step of glycolysis. The protein is ATP-dependent 6-phosphofructokinase of Wolinella succinogenes (strain ATCC 29543 / DSM 1740 / CCUG 13145 / JCM 31913 / LMG 7466 / NCTC 11488 / FDC 602W) (Vibrio succinogenes).